We begin with the raw amino-acid sequence, 104 residues long: Cytochrome c-551 (104 aa).

The signal sequence occupies residues 1–22 (MKPYALLSLLATGTLLAQGAWA). Positions 34, 37, 38, and 83 each coordinate heme c.

In terms of processing, binds 1 heme c group covalently per subunit.

Its subcellular location is the periplasm. Electron donor for cytochrome cd1 in nitrite and nitrate respiration. The sequence is that of Cytochrome c-551 (nirM) from Pseudomonas aeruginosa (strain ATCC 15692 / DSM 22644 / CIP 104116 / JCM 14847 / LMG 12228 / 1C / PRS 101 / PAO1).